The sequence spans 492 residues: Heat shock factor protein 4 (492 aa).

The DNA-binding element occupies 17–121 (VPAFLGKLWA…QLLERVRRKV (105 aa)). The tract at residues 129-203 (GRWRPEDLGR…GPLQAGPSNA (75 aa)) is hydrophobic repeat HR-A/B. The interval 245-322 (LPETNLGLSP…ECDFCVTAPP (78 aa)) is interactions with DUSP26, MAPK1 and MAPK2. Residues 246-285 (PETNLGLSPHRARGPIISDIPEDSPSPEGTRLSPSSDGRR) form a disordered region. A Glycyl lysine isopeptide (Lys-Gly) (interchain with G-Cter in SUMO) cross-link involves residue lysine 293. Position 298 is a phosphoserine (serine 298). Positions 337–400 (GSFSPEGPRN…PAGPLDVLGP (64 aa)) are disordered. The hydrophobic repeat HR-C stretch occupies residues 364–389 (LGLESGDRSPESLLPPMLLQPPQESV). The span at 374–388 (ESLLPPMLLQPPQES) shows a compositional bias: low complexity.

Belongs to the HSF family. Homotrimer. Exhibits constitutive DNA binding and forms trimers even in the absence of stress. Interacts with ALKBH4, DUSP26, MAPK1, MAPK2, MAPK8 and MAP kinase p38. In terms of processing, phosphorylated mainly on serine residues. Phosphorylation on Ser-298 promotes sumoylation on Lys-293. Isoform HSF4B is constitutively sumoylated. Sumoylation represses the transcriptional activity and is promoted by phosphorylation on Ser-298. HSFA is not sumoylated. In terms of tissue distribution, expressed in heart, skeletal muscle, eye and brain, and at much lower levels in some other tissues.

Its subcellular location is the nucleus. Its function is as follows. Heat-shock transcription factor that specifically binds heat shock promoter elements (HSE). Required for denucleation and organelle rupture and degradation that occur during eye lens terminal differentiation, when fiber cells that compose the lens degrade all membrane-bound organelles in order to provide lens with transparency to allow the passage of light. In this process, may regulate denucleation of lens fiber cells in part by activating DNASE2B transcription. May be involved in DNA repair through the transcriptional regulation of RAD51. May up-regulate p53/TP53 protein in eye lens fiber cells, possibly through protein stabilization. In the eye lens, controls the expression of alpha-crystallin B chain/CRYAB and consequently may be involved in the regulation of lysosomal acidification. Transcriptional repressor. In terms of biological role, transcriptional activator. In Homo sapiens (Human), this protein is Heat shock factor protein 4 (HSF4).